The following is a 632-amino-acid chain: tRNA uridine 5-carboxymethylaminomethyl modification enzyme MnmG (632 aa).

FAD contacts are provided by residues 13-18, valine 125, and serine 180; that span reads GGGHAG. An NAD(+)-binding site is contributed by 273 to 287; it reads GPRYCPSIEDKVMRF. Residue glutamine 370 participates in FAD binding.

This sequence belongs to the MnmG family. In terms of assembly, homodimer. Heterotetramer of two MnmE and two MnmG subunits. Requires FAD as cofactor.

The protein localises to the cytoplasm. Its function is as follows. NAD-binding protein involved in the addition of a carboxymethylaminomethyl (cmnm) group at the wobble position (U34) of certain tRNAs, forming tRNA-cmnm(5)s(2)U34. This is tRNA uridine 5-carboxymethylaminomethyl modification enzyme MnmG from Vibrio vulnificus (strain CMCP6).